The chain runs to 183 residues: Holliday junction branch migration complex subunit RuvA (183 aa).

Residues 1–63 (MIVGLIGVVE…EDAHLLYGFL (63 aa)) form a domain I region. The interval 64–141 (EEGEKILFER…IQDETKPMHN (78 aa)) is domain II. Position 141 (Asn141) is a region of interest, flexible linker. Residues 141 to 183 (NEVFLALESLGFKSAEINKVLKTLKPSLSIEAAIKEALQQLRS) form a domain III region.

It belongs to the RuvA family. Homotetramer. Forms an RuvA(8)-RuvB(12)-Holliday junction (HJ) complex. HJ DNA is sandwiched between 2 RuvA tetramers; dsDNA enters through RuvA and exits via RuvB. An RuvB hexamer assembles on each DNA strand where it exits the tetramer. Each RuvB hexamer is contacted by two RuvA subunits (via domain III) on 2 adjacent RuvB subunits; this complex drives branch migration. In the full resolvosome a probable DNA-RuvA(4)-RuvB(12)-RuvC(2) complex forms which resolves the HJ.

It is found in the cytoplasm. In terms of biological role, the RuvA-RuvB-RuvC complex processes Holliday junction (HJ) DNA during genetic recombination and DNA repair, while the RuvA-RuvB complex plays an important role in the rescue of blocked DNA replication forks via replication fork reversal (RFR). RuvA specifically binds to HJ cruciform DNA, conferring on it an open structure. The RuvB hexamer acts as an ATP-dependent pump, pulling dsDNA into and through the RuvAB complex. HJ branch migration allows RuvC to scan DNA until it finds its consensus sequence, where it cleaves and resolves the cruciform DNA. The chain is Holliday junction branch migration complex subunit RuvA from Helicobacter pylori (strain G27).